The following is a 203-amino-acid chain: MTKNQAGVMTSATAGLNLSDSVYERLLRERIIFLGTQVDDDIANKLCAQILLLSAEDPTRDISLYINSPGGSVTAGMAIYDTMQFAECDIRTVGMGLAASMGQFLLTAGTKGKRYALPHARIMMHQPSAGIGGSAADIAIMAEQFAHTKRELNELQALHTGKSVEQVTADADRDRWFTAQEALEYGFIDHVISHANQANGIGG.

The Nucleophile role is filled by S100. H125 is an active-site residue.

The protein belongs to the peptidase S14 family. In terms of assembly, fourteen ClpP subunits assemble into 2 heptameric rings which stack back to back to give a disk-like structure with a central cavity, resembling the structure of eukaryotic proteasomes.

The protein localises to the cytoplasm. It carries out the reaction Hydrolysis of proteins to small peptides in the presence of ATP and magnesium. alpha-casein is the usual test substrate. In the absence of ATP, only oligopeptides shorter than five residues are hydrolyzed (such as succinyl-Leu-Tyr-|-NHMec, and Leu-Tyr-Leu-|-Tyr-Trp, in which cleavage of the -Tyr-|-Leu- and -Tyr-|-Trp bonds also occurs).. In terms of biological role, cleaves peptides in various proteins in a process that requires ATP hydrolysis. Has a chymotrypsin-like activity. Plays a major role in the degradation of misfolded proteins. The chain is ATP-dependent Clp protease proteolytic subunit 2 from Nocardia farcinica (strain IFM 10152).